Consider the following 331-residue polypeptide: DNA-directed RNA polymerase subunit alpha (331 aa).

The segment at 1 to 242 is alpha N-terminal domain (alpha-NTD); the sequence is MEKFLRYNIQ…EHYKPIVTEL (242 aa). Residues 258–331 are alpha C-terminal domain (alpha-CTD); that stretch reads VSSSKSSLAI…RNLKLKEEQN (74 aa).

This sequence belongs to the RNA polymerase alpha chain family. As to quaternary structure, homodimer. The RNAP catalytic core consists of 2 alpha, 1 beta, 1 beta' and 1 omega subunit. When a sigma factor is associated with the core the holoenzyme is formed, which can initiate transcription.

It carries out the reaction RNA(n) + a ribonucleoside 5'-triphosphate = RNA(n+1) + diphosphate. Its function is as follows. DNA-dependent RNA polymerase catalyzes the transcription of DNA into RNA using the four ribonucleoside triphosphates as substrates. The protein is DNA-directed RNA polymerase subunit alpha of Malacoplasma penetrans (strain HF-2) (Mycoplasma penetrans).